The following is a 395-amino-acid chain: Cytoplasmic 60S subunit biogenesis factor REI1 homolog 2 (395 aa).

4 consecutive C2H2-type zinc fingers follow at residues 4-28 (LACN…SEWH), 68-92 (YSCG…SKSH), 171-194 (ACCL…HKFH), and 222-249 (FVCL…AKGH).

This sequence belongs to the REI1 family. As to quaternary structure, can form homodimer. Interacts with RLP24, RLP24A, RPL24B, EBP1 and JJJ1.

The protein localises to the cytoplasm. In terms of biological role, pre-60S-associated factor involved in the cytoplasmic maturation of the 60S subunit. Involved in the dissociation and recycling of other late pre-60S factors before newly synthesized large ribosomal subunits enter translation. Can complement the growth defect of a yeast mutant lacking REI1. Required for leaf growth under cold temperature conditions. The sequence is that of Cytoplasmic 60S subunit biogenesis factor REI1 homolog 2 from Arabidopsis thaliana (Mouse-ear cress).